A 167-amino-acid chain; its full sequence is MQFSIVVMAALASLASAQSMDGIPTCALQCLAQAVVTGGCEASDQACQCGPAREAITAAATPCLLSACTDAADLATAASVGNGMCDKYKMGGDDAAPSPSVNTPAAAAPYPTAPAPNGTVPIGTAAAPSPTANTNETTTVATGSAPQNVAGGLAGIFGLVVAAAFAL.

The first 17 residues, 1–17 (MQFSIVVMAALASLASA), serve as a signal peptide directing secretion. The CFEM domain occupies 18 to 112 (QSMDGIPTCA…TPAAAAPYPT (95 aa)). 4 disulfide bridges follow: cysteine 26/cysteine 68, cysteine 30/cysteine 63, cysteine 40/cysteine 47, and cysteine 49/cysteine 85. Aspartate 44 provides a ligand contact to heme. 2 N-linked (GlcNAc...) asparagine glycosylation sites follow: asparagine 117 and asparagine 135. Glycine 143 carries the GPI-anchor amidated glycine lipid modification. A propeptide spans 144–167 (SAPQNVAGGLAGIFGLVVAAAFAL) (removed in mature form).

It belongs to the RBT5 family.

It localises to the cell membrane. The protein localises to the secreted. Its subcellular location is the host nucleus. It is found in the host cell membrane. In terms of biological role, appears to function during host infection, and may play a role in suppressing the host immune response. In Marssonina brunnea f. sp. multigermtubi (strain MB_m1) (Marssonina leaf spot fungus), this protein is Effector CFEM8.